The primary structure comprises 89 residues: Ubiquinol-cytochrome-c reductase complex assembly factor 3 (89 aa).

Topologically, residues 1 to 7 (MEVARKA) are mitochondrial matrix. Residues 8–28 (LVAVAVLGGGAGVGSILFALV) form a helical membrane-spanning segment. The mediates lipid-binding stretch occupies residues 23-80 (ILFALVTPGELQKQSMLQEMPERDSRRRDEAVRTTELVMATLKDAAATKENVAWRRNW). Residues 29–89 (TPGELQKQSM…WTVSGDGRSA (61 aa)) lie on the Mitochondrial intermembrane side of the membrane.

This sequence belongs to the UQCC3 family. In terms of assembly, associates with the ubiquinol-cytochrome c reductase complex (mitochondrial respiratory chain complex III(CIII) or cytochrome b-c1 complex). Interacts with UQCC1. Forms a complex, named COMC, composed of UQCC1, UQCC2; UQCC3 and UQCC4; mediates MT-CYB hemylation and association with the first nuclear-encoded complex III subunit UQCRQ. Post-translationally, probably cleaved by OMA1 under mitochondrial stress conditions.

It localises to the mitochondrion inner membrane. Required for the assembly of the ubiquinol-cytochrome c reductase complex (mitochondrial respiratory chain complex III or cytochrome b-c1 complex), mediating cytochrome b recruitment and probably stabilization within the complex. Thereby, plays an important role in ATP production by mitochondria. Cardiolipin-binding protein, it may also control the cardiolipin composition of mitochondria membranes and their morphology. This is Ubiquinol-cytochrome-c reductase complex assembly factor 3 from Mus musculus (Mouse).